The following is a 484-amino-acid chain: MTIRHQGQQYRPRMAFLQKIEALVKDMQNPDTGVKTQSQRVLVTSVPHAMTGGDVLQWIIQRLWISSLEAQNLGNFIVKYGYIYPLQDPKNLILKPDSSLYRFQTPYFWPTQQWPAEDTDYAIYLAKRNIKKKGILEEYEKENYNFLNKKINYKWDFVIMQAKEQYRAGKERNKADRYALDCQEKAYWLVHRCPPGMNDVLDYGLDRVTNPNEVKKQTITAVKKEIMYYQQALMRSTVKSSVSLGGIVKYSEQFSSNDAIMSGCLPSNPWITDDTQFWDLNAKLVEIPTKMRVERWAFNFSELIRDPKGRQSFQYFLRKEFSGENLGFWEACEDLKYGDQSKVKEKAEEIYKLFLAPGARRWINIDGKTMDITVKGLKHPHRYVLDAAQTHIYMLMKKDSYARYLKSPIYKEMLAKAIEPQETTKKSSTLPFIRRHLRSSPSPVILRQLEEEAKAREAANTVDITQVMSKLDRRSLLKKELPPK.

The DEP domain maps to 30–105; sequence PDTGVKTQSQ…PDSSLYRFQT (76 aa). Residues 219 to 280 enclose the G protein gamma domain; the sequence is ITAVKKEIMY…ITDDTQFWDL (62 aa). One can recognise an RGS domain in the interval 299–414; it reads NFSELIRDPK…LKSPIYKEML (116 aa).

As to quaternary structure, heterodimer with Gbeta5. Interacts with RGS7BP, leading to regulate the subcellular location of the heterodimer formed with Gbeta5. Component of the RGS9-1-Gbeta5 complex composed of RGS9 (RGS9-1), Gbeta5 (GNB5) and RGS9BP. In terms of processing, phosphorylation is decreased by light exposition.

It is found in the membrane. Inhibits signal transduction by increasing the GTPase activity of G protein alpha subunits thereby driving them into their inactive GDP-bound form. Binds to G(t)-alpha. Involved in phototransduction; key element in the recovery phase of visual transduction. This is Regulator of G-protein signaling 9 from Tamias striatus (Eastern chipmunk).